The primary structure comprises 91 residues: MKLPFIFLITLLIFVSSCTSILINESSDEQRIYSFSPTTSPFDPRSLNQELKIGRIGYCFDCARACMRRGKYIRTCSFERKLCRCSISGIK.

Positions 1–20 (MKLPFIFLITLLIFVSSCTS) are cleaved as a signal peptide. Cystine bridges form between cysteine 59–cysteine 76, cysteine 62–cysteine 83, and cysteine 66–cysteine 85.

It belongs to the DEFL family. As to expression, expressed in the pistil. Detected in the synergid cells.

Its subcellular location is the secreted. Functionally, pollen tube attractants guiding pollen tubes to the ovular micropyle. This Arabidopsis thaliana (Mouse-ear cress) protein is Protein LURE 1.6.